The following is a 775-amino-acid chain: GRIP and coiled-coil domain-containing protein 1 (775 aa).

Positions 13–61 form a coiled coil; the sequence is SKKDLLETIETQKKQLLQYQARLKDVVRAYKSLLKEKEALEASIKVLSV. Over residues 84 to 93 the composition is skewed to basic and acidic residues; it reads DDRCSTHSED. Disordered regions lie at residues 84–153 and 614–639; these read DDRC…AGGE and GLPG…SDSL. Low complexity-rich tracts occupy residues 94-110, 133-147, and 629-638; these read STGT…LTST, ASWS…SGDG, and DPADTSSSDS. Residues 153-763 are a coiled coil; sequence EVDKRLHQLK…PEEKQVIMRL (611 aa). One can recognise a GRIP domain in the interval 713–763; the sequence is QSREGANLEYLKNIIYRFLTLPDSLGRQQTLTAILTILHFSPEEKQVIMRL.

It localises to the cytoplasm. It is found in the golgi apparatus membrane. Its function is as follows. Probably involved in maintaining Golgi structure. This Homo sapiens (Human) protein is GRIP and coiled-coil domain-containing protein 1 (GCC1).